Consider the following 500-residue polypeptide: Maturase K (500 aa).

The protein belongs to the intron maturase 2 family. MatK subfamily.

Its subcellular location is the plastid. The protein resides in the chloroplast. Functionally, usually encoded in the trnK tRNA gene intron. Probably assists in splicing its own and other chloroplast group II introns. In Helianthus annuus (Common sunflower), this protein is Maturase K.